The primary structure comprises 616 residues: FAD-linked oxidoreductase cheF (616 aa).

The 185-residue stretch at 160-344 folds into the FAD-binding PCMH-type domain; it reads NQGLVSPWYV…LSMTVRVEPA (185 aa).

Belongs to the oxygen-dependent FAD-linked oxidoreductase family. It depends on FAD as a cofactor.

Its pathway is secondary metabolite biosynthesis. Functionally, FAD-linked oxidoreductase; part of the gene cluster that mediates the biosynthesis of chaetoglobosin A which has a unique inhibitory activity against actin polymerization in mammalian cells. Chaetoglobosin A and its intermediates are involved in the morphological differentiation of C.globosum. The first step of the pathway is the synthesis of prochaetoglobosin I via condensation of one acetyl-CoA, 8 malonyl-CoA, and a L-tryptophan molecule by the PKS-NRPS hybrid synthetase cheA, followed by reduction of backbone double bond to install desired geometry by the enoyl reductase cheB. Further multiple oxidation steps performed by the cytochrome P450 monooxygenases cheE and cheG, as well as by the FAD-linked oxidoreductase cheF, lead to the formation of chaetoglobosin A. Depending on the order of action of these reductases, distinct intermediates can be identified. Within the pathway, the cytochrome P450 monooxygenase cheE catalyzes a stereospecific epoxidation on prochaetoglobosin I, cytoglobosin D, and chaetoglobosin J intermediates. The FAD-linked oxidoreductase cheF performs dehydrogenation of the C-20 hydroxyl groups in the 20-dihyrochaetoglobosin A and cytoglobosin D intermediates. Finally, the cytochrome P450 monooxygenase cheG can catalyze the stereospecific dihydroxylation of prochaetoglobosin I and prochaetoglobosin IV at C-19 and C-20, respectively. The Diels-Alderase cheD may play a role in the post-PKS-NRPS biosynthetic steps catalyzing Diels-Alder cyclization. This Chaetomium globosum (strain ATCC 6205 / CBS 148.51 / DSM 1962 / NBRC 6347 / NRRL 1970) (Soil fungus) protein is FAD-linked oxidoreductase cheF.